Consider the following 240-residue polypeptide: 4-hydroxy-tetrahydrodipicolinate reductase (240 aa).

NAD(+) contacts are provided by residues 79–81 (ATT) and 103–106 (SANM). The active-site Proton donor/acceptor is the His-135. (S)-2,3,4,5-tetrahydrodipicolinate is bound at residue His-136. Lys-139 serves as the catalytic Proton donor. 145-146 (GT) contributes to the (S)-2,3,4,5-tetrahydrodipicolinate binding site.

This sequence belongs to the DapB family.

Its subcellular location is the cytoplasm. It catalyses the reaction (S)-2,3,4,5-tetrahydrodipicolinate + NAD(+) + H2O = (2S,4S)-4-hydroxy-2,3,4,5-tetrahydrodipicolinate + NADH + H(+). The enzyme catalyses (S)-2,3,4,5-tetrahydrodipicolinate + NADP(+) + H2O = (2S,4S)-4-hydroxy-2,3,4,5-tetrahydrodipicolinate + NADPH + H(+). It functions in the pathway amino-acid biosynthesis; L-lysine biosynthesis via DAP pathway; (S)-tetrahydrodipicolinate from L-aspartate: step 4/4. Functionally, catalyzes the conversion of 4-hydroxy-tetrahydrodipicolinate (HTPA) to tetrahydrodipicolinate. This is 4-hydroxy-tetrahydrodipicolinate reductase from Staphylococcus aureus (strain MRSA252).